The chain runs to 395 residues: 1-deoxy-D-xylulose 5-phosphate reductoisomerase (395 aa).

NADPH-binding residues include T13, G14, S15, I16, K40, and N127. K128 contributes to the 1-deoxy-D-xylulose 5-phosphate binding site. Residue E129 coordinates NADPH. D153 lines the Mn(2+) pocket. 1-deoxy-D-xylulose 5-phosphate contacts are provided by S154, E155, S184, and H207. Residue E155 participates in Mn(2+) binding. G213 serves as a coordination point for NADPH. 4 residues coordinate 1-deoxy-D-xylulose 5-phosphate: S220, N225, K226, and E229. E229 is a Mn(2+) binding site.

Belongs to the DXR family. It depends on Mg(2+) as a cofactor. The cofactor is Mn(2+).

The enzyme catalyses 2-C-methyl-D-erythritol 4-phosphate + NADP(+) = 1-deoxy-D-xylulose 5-phosphate + NADPH + H(+). It functions in the pathway isoprenoid biosynthesis; isopentenyl diphosphate biosynthesis via DXP pathway; isopentenyl diphosphate from 1-deoxy-D-xylulose 5-phosphate: step 1/6. Functionally, catalyzes the NADPH-dependent rearrangement and reduction of 1-deoxy-D-xylulose-5-phosphate (DXP) to 2-C-methyl-D-erythritol 4-phosphate (MEP). The chain is 1-deoxy-D-xylulose 5-phosphate reductoisomerase from Nitrosospira multiformis (strain ATCC 25196 / NCIMB 11849 / C 71).